A 40-amino-acid polypeptide reads, in one-letter code: Photosystem II reaction center protein J (40 aa).

Residues 8-28 (IPLWLVGTVTGIPVIGLIGVF) form a helical membrane-spanning segment.

It belongs to the PsbJ family. As to quaternary structure, PSII is composed of 1 copy each of membrane proteins PsbA, PsbB, PsbC, PsbD, PsbE, PsbF, PsbH, PsbI, PsbJ, PsbK, PsbL, PsbM, PsbT, PsbX, PsbY, PsbZ, Psb30/Ycf12, at least 3 peripheral proteins of the oxygen-evolving complex and a large number of cofactors. It forms dimeric complexes.

The protein localises to the plastid. It localises to the chloroplast thylakoid membrane. In terms of biological role, one of the components of the core complex of photosystem II (PSII). PSII is a light-driven water:plastoquinone oxidoreductase that uses light energy to abstract electrons from H(2)O, generating O(2) and a proton gradient subsequently used for ATP formation. It consists of a core antenna complex that captures photons, and an electron transfer chain that converts photonic excitation into a charge separation. This is Photosystem II reaction center protein J from Musa acuminata (Banana).